Here is a 563-residue protein sequence, read N- to C-terminus: Arginine--tRNA ligase (563 aa).

Residues 121–131 (PNIAKPFSIGH) carry the 'HIGH' region motif.

The protein belongs to the class-I aminoacyl-tRNA synthetase family. As to quaternary structure, monomer.

The protein resides in the cytoplasm. It catalyses the reaction tRNA(Arg) + L-arginine + ATP = L-arginyl-tRNA(Arg) + AMP + diphosphate. This Streptococcus equi subsp. equi (strain 4047) protein is Arginine--tRNA ligase.